The following is a 241-amino-acid chain: Glucosamine-6-phosphate deaminase (241 aa).

The active-site Proton acceptor; for enolization step is Asp67. The For ring-opening step role is filled by Asn136. His138 functions as the Proton acceptor; for ring-opening step in the catalytic mechanism. Residue Glu143 is the For ring-opening step of the active site.

It belongs to the glucosamine/galactosamine-6-phosphate isomerase family. NagB subfamily.

It carries out the reaction alpha-D-glucosamine 6-phosphate + H2O = beta-D-fructose 6-phosphate + NH4(+). Its pathway is amino-sugar metabolism; N-acetylneuraminate degradation; D-fructose 6-phosphate from N-acetylneuraminate: step 5/5. Catalyzes the reversible isomerization-deamination of glucosamine 6-phosphate (GlcN6P) to form fructose 6-phosphate (Fru6P) and ammonium ion. The chain is Glucosamine-6-phosphate deaminase from Halothermothrix orenii (strain H 168 / OCM 544 / DSM 9562).